The primary structure comprises 1011 residues: Vacuolar membrane protease (1011 aa).

Residues 1–9 are Cytoplasmic-facing; that stretch reads MSNPFAFRS. The helical transmembrane segment at 10-30 threads the bilayer; that stretch reads AQVTFWTTVVYLALLVPLVVI. Residues 31 to 378 lie on the Vacuolar side of the membrane; that stretch reads NEGVPPVQPD…TFVLFGLRGM (348 aa). N-linked (GlcNAc...) asparagine glycosylation is found at N50 and N106. The Zn(2+) site is built by H159 and D171. Catalysis depends on E205, which acts as the Proton acceptor. Zn(2+)-binding residues include E206, E231, and H304. The N-linked (GlcNAc...) asparagine glycan is linked to N331. Residues 379 to 399 traverse the membrane as a helical segment; that stretch reads FAWSLTVLIVGPLTLFGMMYL. Residues 400–439 lie on the Cytoplasmic side of the membrane; it reads VHKQGKGYAFHTKLRATSDSSSEDGDDEDGEVIRLGGWKG. Residues 440–460 traverse the membrane as a helical segment; sequence FFRFPFALIVAGALVTGAALL. Residues 461–471 are Vacuolar-facing; sequence LRKMNPFIIYS. A helical transmembrane segment spans residues 472-492; sequence SEYAVWAMMISLFYFGFWLIM. Topologically, residues 493-505 are cytoplasmic; it reads RGSSYTRPSALHR. The chain crosses the membrane as a helical span at residues 506 to 526; that stretch reads LYVHIWLFILGWVALVFATVL. At 527–536 the chain is on the vacuolar side; that stretch reads EDRMRIASGY. Residues 537-557 form a helical membrane-spanning segment; it reads IFVFWESQVFLATLVAVCELF. The Cytoplasmic segment spans residues 558-682; that stretch reads SLPRKIDFAR…WSGPMVTSTW (125 aa). Positions 595 to 609 are enriched in polar residues; that stretch reads EATSPQRAGQSSNSP. 2 disordered regions span residues 595–627 and 650–671; these read EATSPQRAGQSSNSPQEDDEDDVPDEETPLFRK and IMDSNNEAEDGPKRKQPFEGEQ. Residues 610–622 show a composition bias toward acidic residues; sequence QEDDEDDVPDEET. The chain crosses the membrane as a helical span at residues 683-703; that stretch reads ILQFLLLGPFMVILGGQVGLL. The Vacuolar portion of the chain corresponds to 704 to 719; the sequence is LTSAVNQTGVDGSSLL. N-linked (GlcNAc...) asparagine glycosylation is present at N709. The chain crosses the membrane as a helical span at residues 720–740; sequence APYLMIAALSAILLMPLSPFI. Over 741–747 the chain is Cytoplasmic; the sequence is HRVTKHV. Residues 748–768 traverse the membrane as a helical segment; that stretch reads PLFLLAVAFATLIYSLVAFPF. The Vacuolar segment spans residues 769–1011; it reads SPRAPYKTFF…LVEGSKAFKV (243 aa). N-linked (GlcNAc...) asparagine glycosylation is present at N872.

The protein belongs to the peptidase M28 family. Zn(2+) serves as cofactor.

It localises to the vacuole membrane. May be involved in vacuolar sorting and osmoregulation. The polypeptide is Vacuolar membrane protease (Pyricularia oryzae (strain 70-15 / ATCC MYA-4617 / FGSC 8958) (Rice blast fungus)).